The sequence spans 159 residues: Sumo-conjugating enzyme ubc9 (159 aa).

Residues 4–157 (ISSARLSEER…VKAQSKVYPP (154 aa)) enclose the UBC core domain. Residue C93 is the Glycyl thioester intermediate of the active site.

This sequence belongs to the ubiquitin-conjugating enzyme family.

It localises to the nucleus. Its pathway is protein modification; protein sumoylation. Functionally, accepts the ubiquitin-like protein sumo from the E1 complex and catalyzes its covalent attachment to other proteins with the help of an E3 ligase. The sequence is that of Sumo-conjugating enzyme ubc9 (ubc9) from Dictyostelium discoideum (Social amoeba).